Reading from the N-terminus, the 39-residue chain is Natriuretic peptide TcNPa (39 aa).

A propeptide spanning residues 1–8 (SGSETAKI) is cleaved from the precursor. Cys-12 and Cys-28 are joined by a disulfide. Thr-35 carries an O-linked (GalNAc...) threonine glycan.

It belongs to the natriuretic peptide family. O-linked glycans consist of galactosyl-beta(1-3)-N-acetylgalactosamine (Gal-GalNAc). In terms of processing, the synthetic non-glycosylated form shows higher potency on natriuretic receptors (EC(50)=672.90 nM) and NPR2 (EC(50)=261.0 nM). Expressed by the venom gland.

Its subcellular location is the secreted. Functionally, snake venom natriuretic peptide that targets both NPR1 (EC(50)=1080.0 nM) and NPR2 (EC(50)=328.60 nM). Exhibits hypotensive and vasodepressor activities. This is Natriuretic peptide TcNPa from Tropidechis carinatus (Australian rough-scaled snake).